The sequence spans 385 residues: Probable endopeptidase MT2245 (385 aa).

Pro residues predominate over residues 235–257 (AALPPGAPPGDGPAPGVAPPPGG). The disordered stretch occupies residues 235–268 (AALPPGAPPGDGPAPGVAPPPGGMPGLPFVQPDG). The NlpC/P60 domain occupies 270 to 385 (GGDRTAVVQA…SGPIYDARRY (116 aa)). Cysteine 300 (nucleophile) is an active-site residue. Histidine 348 serves as the catalytic Proton acceptor. Histidine 360 is a catalytic residue.

Belongs to the peptidase C40 family.

The chain is Probable endopeptidase MT2245 from Mycobacterium tuberculosis (strain CDC 1551 / Oshkosh).